The sequence spans 223 residues: Type II restriction enzyme BglII (223 aa).

The Mg(2+) site is built by Asp-84 and Val-94.

In terms of assembly, homodimer. Mg(2+) is required as a cofactor.

The enzyme catalyses Endonucleolytic cleavage of DNA to give specific double-stranded fragments with terminal 5'-phosphates.. In terms of biological role, a P subtype restriction enzyme that recognizes the double-stranded sequence 5'-AGATCT-3' and cleaves after A-1. The polypeptide is Type II restriction enzyme BglII (bglIIR) (Bacillus subtilis).